Consider the following 367-residue polypeptide: tRNA 2-selenouridine synthase (367 aa).

One can recognise a Rhodanese domain in the interval 12 to 136 (FLNDRPLMDA…LRGFLIDTLE (125 aa)). Catalysis depends on C95, which acts as the S-selanylcysteine intermediate.

The protein belongs to the SelU family. In terms of assembly, monomer.

The catalysed reaction is 5-methylaminomethyl-2-thiouridine(34) in tRNA + selenophosphate + (2E)-geranyl diphosphate + H2O + H(+) = 5-methylaminomethyl-2-selenouridine(34) in tRNA + (2E)-thiogeraniol + phosphate + diphosphate. It carries out the reaction 5-methylaminomethyl-2-thiouridine(34) in tRNA + (2E)-geranyl diphosphate = 5-methylaminomethyl-S-(2E)-geranyl-thiouridine(34) in tRNA + diphosphate. It catalyses the reaction 5-methylaminomethyl-S-(2E)-geranyl-thiouridine(34) in tRNA + selenophosphate + H(+) = 5-methylaminomethyl-2-(Se-phospho)selenouridine(34) in tRNA + (2E)-thiogeraniol. The enzyme catalyses 5-methylaminomethyl-2-(Se-phospho)selenouridine(34) in tRNA + H2O = 5-methylaminomethyl-2-selenouridine(34) in tRNA + phosphate. Involved in the post-transcriptional modification of the uridine at the wobble position (U34) of tRNA(Lys), tRNA(Glu) and tRNA(Gln). Catalyzes the conversion of 2-thiouridine (S2U-RNA) to 2-selenouridine (Se2U-RNA). Acts in a two-step process involving geranylation of 2-thiouridine (S2U) to S-geranyl-2-thiouridine (geS2U) and subsequent selenation of the latter derivative to 2-selenouridine (Se2U) in the tRNA chain. The polypeptide is tRNA 2-selenouridine synthase (Pseudomonas fluorescens (strain Pf0-1)).